A 356-amino-acid chain; its full sequence is Heme A synthase (356 aa).

Transmembrane regions (helical) follow at residues 24–44 (IAIW…VGGV), 106–126 (FHRL…VYFM), 139–159 (LLGI…MVMS), 174–194 (AHLG…TGLI), and 214–234 (AWML…VAGI). H276 lines the heme pocket. Transmembrane regions (helical) follow at residues 278–298 (LIAW…KQLS), 309–329 (LLLL…LLSV), and 331–351 (LTFA…ALWV). H337 is a heme binding site.

The protein belongs to the COX15/CtaA family. Type 2 subfamily. Interacts with CtaB. Heme b serves as cofactor.

It is found in the cell membrane. The catalysed reaction is Fe(II)-heme o + 2 A + H2O = Fe(II)-heme a + 2 AH2. Its pathway is porphyrin-containing compound metabolism; heme A biosynthesis; heme A from heme O: step 1/1. Catalyzes the conversion of heme O to heme A by two successive hydroxylations of the methyl group at C8. The first hydroxylation forms heme I, the second hydroxylation results in an unstable dihydroxymethyl group, which spontaneously dehydrates, resulting in the formyl group of heme A. The protein is Heme A synthase of Nitrosomonas eutropha (strain DSM 101675 / C91 / Nm57).